Here is a 187-residue protein sequence, read N- to C-terminus: UPF0340 protein SPN23F05980 (187 aa).

Belongs to the UPF0340 family.

The chain is UPF0340 protein SPN23F05980 from Streptococcus pneumoniae (strain ATCC 700669 / Spain 23F-1).